The following is a 1136-amino-acid chain: Carbamoyl phosphate synthase large chain (1136 aa).

The interval Met1 to Asp402 is carboxyphosphate synthetic domain. Positions 129, 169, 175, 176, 208, 210, 215, 241, 242, 243, 285, and 299 each coordinate ATP. Residues Lys133–Leu328 form the ATP-grasp 1 domain. Residues Gln285, Glu299, and Asn301 each contribute to the Mg(2+) site. Residues Gln285, Glu299, and Asn301 each coordinate Mn(2+). The tract at residues Lys403–Thr551 is oligomerization domain. The carbamoyl phosphate synthetic domain stretch occupies residues Glu552–Tyr962. The ATP-grasp 2 domain occupies Gly681–Ala881. Arg717, Lys765, Leu767, Glu772, Gly797, Val798, His799, Ser800, Gln840, and Glu852 together coordinate ATP. Gln840, Glu852, and Asn854 together coordinate Mg(2+). Residues Gln840, Glu852, and Asn854 each contribute to the Mn(2+) site. Residues Glu963 to Gln1136 are allosteric domain. One can recognise an MGS-like domain in the interval Gly964–Leu1122.

It belongs to the CarB family. As to quaternary structure, composed of two chains; the small (or glutamine) chain promotes the hydrolysis of glutamine to ammonia, which is used by the large (or ammonia) chain to synthesize carbamoyl phosphate. Tetramer of heterodimers (alpha,beta)4. Requires Mg(2+) as cofactor. The cofactor is Mn(2+).

The enzyme catalyses hydrogencarbonate + L-glutamine + 2 ATP + H2O = carbamoyl phosphate + L-glutamate + 2 ADP + phosphate + 2 H(+). It catalyses the reaction hydrogencarbonate + NH4(+) + 2 ATP = carbamoyl phosphate + 2 ADP + phosphate + 2 H(+). It participates in amino-acid biosynthesis; L-arginine biosynthesis; carbamoyl phosphate from bicarbonate: step 1/1. The protein operates within pyrimidine metabolism; UMP biosynthesis via de novo pathway; (S)-dihydroorotate from bicarbonate: step 1/3. In terms of biological role, large subunit of the glutamine-dependent carbamoyl phosphate synthetase (CPSase). CPSase catalyzes the formation of carbamoyl phosphate from the ammonia moiety of glutamine, carbonate, and phosphate donated by ATP, constituting the first step of 2 biosynthetic pathways, one leading to arginine and/or urea and the other to pyrimidine nucleotides. The large subunit (synthetase) binds the substrates ammonia (free or transferred from glutamine from the small subunit), hydrogencarbonate and ATP and carries out an ATP-coupled ligase reaction, activating hydrogencarbonate by forming carboxy phosphate which reacts with ammonia to form carbamoyl phosphate. In Bifidobacterium animalis subsp. lactis (strain AD011), this protein is Carbamoyl phosphate synthase large chain.